We begin with the raw amino-acid sequence, 327 residues long: Acetyl-coenzyme A carboxylase carboxyl transferase subunit beta (327 aa).

Positions 24 to 293 (LWIKCPDTGQ…LTVTTAVEAP (270 aa)) constitute a CoA carboxyltransferase N-terminal domain. Residues 293-311 (PAEAAAKAEPEATTTEQPG) are compositionally biased toward low complexity. Residues 293-327 (PAEAAAKAEPEATTTEQPGAPAPTEPPAQPAAPQA) form a disordered region. Over residues 312-327 (APAPTEPPAQPAAPQA) the composition is skewed to pro residues.

The protein belongs to the AccD/PCCB family. In terms of assembly, acetyl-CoA carboxylase is a heterohexamer composed of biotin carboxyl carrier protein (AccB), biotin carboxylase (AccC) and two subunits each of ACCase subunit alpha (AccA) and ACCase subunit beta (AccD).

The protein localises to the cytoplasm. The enzyme catalyses N(6)-carboxybiotinyl-L-lysyl-[protein] + acetyl-CoA = N(6)-biotinyl-L-lysyl-[protein] + malonyl-CoA. The protein operates within lipid metabolism; malonyl-CoA biosynthesis; malonyl-CoA from acetyl-CoA: step 1/1. Functionally, component of the acetyl coenzyme A carboxylase (ACC) complex. Biotin carboxylase (BC) catalyzes the carboxylation of biotin on its carrier protein (BCCP) and then the CO(2) group is transferred by the transcarboxylase to acetyl-CoA to form malonyl-CoA. The protein is Acetyl-coenzyme A carboxylase carboxyl transferase subunit beta of Rhodopseudomonas palustris (strain ATCC BAA-98 / CGA009).